The sequence spans 304 residues: Iron(III) enterobactin esterase (304 aa).

A signal peptide spans 1–25 (MRTSLLVAALGLALAAALPGGAPLA). Catalysis depends on charge relay system residues S182, E242, and H283.

Belongs to the esterase D family. In terms of assembly, monomer.

It is found in the periplasm. The catalysed reaction is Fe(III)-enterobactin + 3 H2O + H(+) = Fe(III)-[N-(2,3-dihydroxybenzoyl)-L-serine] + 2 N-(2,3-dihydroxybenzoyl)-L-serine. It catalyses the reaction Fe(III)-enterobactin + H2O = Fe(III)-[N-(2,3-dihydroxybenzoyl)-L-serine]3 + H(+). The enzyme catalyses Fe(III)-[N-(2,3-dihydroxybenzoyl)-L-serine]3 + H2O + H(+) = Fe(III)-[N-(2,3-dihydroxybenzoyl)-L-serine]2 + N-(2,3-dihydroxybenzoyl)-L-serine. It carries out the reaction Fe(III)-[N-(2,3-dihydroxybenzoyl)-L-serine]2 + H2O + H(+) = Fe(III)-[N-(2,3-dihydroxybenzoyl)-L-serine] + N-(2,3-dihydroxybenzoyl)-L-serine. In terms of biological role, catalyzes the hydrolysis of ferric enterobactin (Fe-Ent). Hydrolyzes Fe-Ent into three molecules of 2,3-dihydroxybenzoylserine (DHBS) still complexed with ferric iron. Iron reduction is necessary to obtain complete release of the metal from DHBS. It can hydrolyze salmochelin S4 (diglucosyl-C-Ent) but is not involved in iron acquisition by this siderophore. This Pseudomonas aeruginosa (strain ATCC 15692 / DSM 22644 / CIP 104116 / JCM 14847 / LMG 12228 / 1C / PRS 101 / PAO1) protein is Iron(III) enterobactin esterase.